A 619-amino-acid polypeptide reads, in one-letter code: Mitochondrial Rho GTPase 1-A (619 aa).

Topologically, residues 1–593 (MRKDVRILLV…TQADLKNSTF (593 aa)) are cytoplasmic. Residues 2–168 (RKDVRILLVG…FYYAQKAVLH (167 aa)) form the Miro 1 domain. 5 residues coordinate GTP: Lys-14, Gly-16, Lys-17, Thr-18, and Ser-19. Thr-18 provides a ligand contact to Mg(2+). Residues Pro-35 and Asp-57 each coordinate Mg(2+). GTP is bound by residues Ser-59, Asn-118, Lys-119, Asp-121, Ala-149, and Lys-150. EF-hand domains lie at 184–219 (SCIK…CFNI) and 304–339 (NAYL…FPYM). Ca(2+) is bound by residues Asp-197, Asp-199, Asp-201, Glu-208, Asp-317, Asp-319, Asp-321, Ala-323, and Glu-328. The Miro 2 domain occupies 416 to 580 (RSVFRCNVLG…YTKLTTMAMY (165 aa)). 11 residues coordinate GTP: Arg-427, Cys-429, Gly-430, Lys-431, Ser-432, Gly-433, Lys-447, Lys-529, Asp-531, Thr-559, and Cys-560. Position 427 (Arg-427) interacts with Mg(2+). A helical; Anchor for type IV membrane protein transmembrane segment spans residues 594 to 616 (WLRASVGATVFAVLGFAMYKALL). Residues 617 to 619 (KQR) are Mitochondrial intermembrane-facing.

This sequence belongs to the mitochondrial Rho GTPase family. In terms of assembly, homodimer.

The protein resides in the mitochondrion outer membrane. The enzyme catalyses GTP + H2O = GDP + phosphate + H(+). It catalyses the reaction ATP + H2O = ADP + phosphate + H(+). The catalysed reaction is UTP + H2O = UDP + phosphate + H(+). Functionally, atypical mitochondrial nucleoside-triphosphatase (NTPase) involved in mitochondrial trafficking. Probably involved in control of anterograde transport of mitochondria and their subcellular distribution. Can hydrolyze GTP, ATP and UTP. The protein is Mitochondrial Rho GTPase 1-A (rhot1a) of Danio rerio (Zebrafish).